A 497-amino-acid chain; its full sequence is Cytochrome P450 76AD1 (497 aa).

The chain crosses the membrane as a helical span at residues 4 to 24 (ATLAMILAIWFISFHFIKLLF). C439 lines the heme pocket.

This sequence belongs to the cytochrome P450 family. It depends on heme as a cofactor.

The protein resides in the membrane. Its pathway is pigment biosynthesis; betalain biosynthesis. Its function is as follows. Converts L-DOPA to cyclo-DOPA in the betalain pathway. Provides the cyclo-DOPA moiety of all red betacyanins. In Beta vulgaris (Sugar beet), this protein is Cytochrome P450 76AD1.